Consider the following 189-residue polypeptide: Ornithine decarboxylase antizyme 2 (189 aa).

The residue at position 186 (Ser186) is a Phosphoserine.

This sequence belongs to the ODC antizyme family. Interacts with ODC1 and thereby sterically blocks ODC homodimerization. Interacts with AZIN2; this interaction disrupts the interaction between the antizyme and ODC1.

The protein resides in the nucleus. In terms of biological role, ornithine decarboxylase (ODC) antizyme protein that negatively regulates ODC activity and intracellular polyamine biosynthesis and uptake in response to increased intracellular polyamine levels. Binds to ODC monomers, inhibiting the assembly of the functional ODC homodimers. Does not target the ODC monomers for degradation, which allows a protein synthesis-independent restoration of ODC activity. Involved in the translocation of AZIN2 from ER-Golgi intermediate compartment (ERGIC) to the cytosol. The chain is Ornithine decarboxylase antizyme 2 (OAZ2) from Homo sapiens (Human).